The following is a 391-amino-acid chain: cAMP-dependent protein kinase regulatory subunit (391 aa).

The interval 1-84 (MFKSPFGANA…PPNPESYPAQ (84 aa)) is disordered. Positions 1–131 (MFKSPFGANA…RLKTAIAGNF (131 aa)) are dimerization and phosphorylation. The segment covering 38–55 (TVTSPTSPNFGMNAQSMF) has biased composition (polar residues). At Ser-92 the chain carries Phosphoserine. 3',5'-cyclic AMP is bound by residues 132–261 (LFSH…FLRE), Glu-210, Arg-219, 264–381 (LLQT…DIKT), Glu-331, and Arg-340.

The protein belongs to the cAMP-dependent kinase regulatory chain family. As to quaternary structure, tetramer, composed of 2 regulatory (R) and 2 catalytic (C) subunits. In the presence of cAMP it dissociates into 2 active monomeric C subunits and an R dimer.

This is cAMP-dependent protein kinase regulatory subunit (PKAR) from Colletotrichum orbiculare (strain 104-T / ATCC 96160 / CBS 514.97 / LARS 414 / MAFF 240422) (Cucumber anthracnose fungus).